The sequence spans 328 residues: Transcription factor bHLH84 (328 aa).

The disordered stretch occupies residues 145–248 (QCESSKKRTR…ASRGAATDPQ (104 aa)). A compositionally biased stretch (basic and acidic residues) spans 220–229 (LSKEDGEDSK). Residues 243 to 292 (AATDPQSLYARKRRERINERLRILQHLVPNGTKVDISTMLEEAVQYVKFL) enclose the bHLH domain.

The protein belongs to the bHLH protein family. In terms of assembly, homodimer.

It localises to the nucleus. The chain is Transcription factor bHLH84 (BHLH84) from Arabidopsis thaliana (Mouse-ear cress).